A 467-amino-acid polypeptide reads, in one-letter code: tRNA modification GTPase MnmE (467 aa).

(6S)-5-formyl-5,6,7,8-tetrahydrofolate is bound by residues Arg-27, Glu-89, and Arg-128. Positions 225-387 constitute a TrmE-type G domain; the sequence is GISMVIAGRP…LKQAIFTVVT (163 aa). K(+) is bound at residue Asn-235. Residues 235-240, 254-260, 279-282, and 368-370 contribute to the GTP site; these read NVGKSS, TSIAGTT, DTAG, and SAR. Position 239 (Ser-239) interacts with Mg(2+). Thr-254, Ile-256, and Thr-259 together coordinate K(+). Thr-260 is a binding site for Mg(2+). Residue Lys-467 coordinates (6S)-5-formyl-5,6,7,8-tetrahydrofolate.

This sequence belongs to the TRAFAC class TrmE-Era-EngA-EngB-Septin-like GTPase superfamily. TrmE GTPase family. As to quaternary structure, homodimer. Heterotetramer of two MnmE and two MnmG subunits. It depends on K(+) as a cofactor.

Its subcellular location is the cytoplasm. Its function is as follows. Exhibits a very high intrinsic GTPase hydrolysis rate. Involved in the addition of a carboxymethylaminomethyl (cmnm) group at the wobble position (U34) of certain tRNAs, forming tRNA-cmnm(5)s(2)U34. The chain is tRNA modification GTPase MnmE from Desulfotalea psychrophila (strain LSv54 / DSM 12343).